We begin with the raw amino-acid sequence, 250 residues long: Small ribosomal subunit protein uS3 (250 aa).

The 69-residue stretch at 39–107 (VREFLTKKLK…PAQVSINEID (69 aa)) folds into the KH type-2 domain. Residues 214 to 250 (VMNPAPQEERPAKRGRGRGEGQERRGRRSDRAADKGE) form a disordered region. Residues 220-250 (QEERPAKRGRGRGEGQERRGRRSDRAADKGE) show a composition bias toward basic and acidic residues.

It belongs to the universal ribosomal protein uS3 family. Part of the 30S ribosomal subunit. Forms a tight complex with proteins S10 and S14.

In terms of biological role, binds the lower part of the 30S subunit head. Binds mRNA in the 70S ribosome, positioning it for translation. This is Small ribosomal subunit protein uS3 from Acinetobacter baylyi (strain ATCC 33305 / BD413 / ADP1).